The following is a 424-amino-acid chain: MSYVIDRRLNGKNKSTVNRQRFLRRYREHIKKAVEEAVSRRSIMDMEHGEQISIPGRDIDEPVLHHGRGGKQTIVHPGNKEFTAGEHIPRPQGGGGGGGGRGKAGNSGEGMDEFVFQITQEEFLEFMFEDLELPNLVKRHLTGADTFKTVRAGIANEGNPSRINIVRTLRSAHARRIALTGSSRALLREAQKELDRLRVEEPDNFTDIQEVEQEIERLKARINRLPFLDTFDLKYNLLVKQPNPSSKAVMFCLMDVSGSMTQATKDIAKRFFILLYLFLKRNYDRIEVVFIRHHTSAREVDEEEFFYSRETGGTIVSSALKLMQEIMAERYPASDWNIYAAQASDGDNWNDDSPICRDILSKQIMPHVQYYTYVEITPREHQALWYEYERIGEAYPDTFAQQQLVSAGDIYPVFRELFQRRLAT.

Residues 81–107 are disordered; sequence EFTAGEHIPRPQGGGGGGGGRGKAGNS. A compositionally biased stretch (gly residues) spans 92–107; it reads QGGGGGGGGRGKAGNS.

This sequence belongs to the UPF0229 family.

The sequence is that of UPF0229 protein PputGB1_0427 from Pseudomonas putida (strain GB-1).